The chain runs to 465 residues: Ribulose bisphosphate carboxylase large chain (465 aa).

At Lys-4 the chain carries N6,N6,N6-trimethyllysine. Residues Asn-113 and Thr-163 each contribute to the substrate site. Residue Lys-165 is the Proton acceptor of the active site. Lys-167 contacts substrate. Residues Lys-191, Asp-193, and Glu-194 each contribute to the Mg(2+) site. Lys-191 bears the N6-carboxylysine mark. The Proton acceptor role is filled by His-284. The substrate site is built by Arg-285, His-317, and Ser-369.

This sequence belongs to the RuBisCO large chain family. Type I subfamily. As to quaternary structure, heterohexadecamer of 8 large chains and 8 small chains; disulfide-linked. The disulfide link is formed within the large subunit homodimers. Mg(2+) serves as cofactor. In terms of processing, the disulfide bond which can form in the large chain dimeric partners within the hexadecamer appears to be associated with oxidative stress and protein turnover.

Its subcellular location is the plastid. It localises to the chloroplast. The catalysed reaction is 2 (2R)-3-phosphoglycerate + 2 H(+) = D-ribulose 1,5-bisphosphate + CO2 + H2O. It catalyses the reaction D-ribulose 1,5-bisphosphate + O2 = 2-phosphoglycolate + (2R)-3-phosphoglycerate + 2 H(+). RuBisCO catalyzes two reactions: the carboxylation of D-ribulose 1,5-bisphosphate, the primary event in carbon dioxide fixation, as well as the oxidative fragmentation of the pentose substrate in the photorespiration process. Both reactions occur simultaneously and in competition at the same active site. The polypeptide is Ribulose bisphosphate carboxylase large chain (Fragaria ananassa (Strawberry)).